Consider the following 22-residue polypeptide: Unknown protein 20 from 2D-PAGE (22 aa).

This chain is Unknown protein 20 from 2D-PAGE, found in Bombyx mori (Silk moth).